We begin with the raw amino-acid sequence, 77 residues long: Small ribosomal subunit protein bS18 (77 aa).

Belongs to the bacterial ribosomal protein bS18 family. As to quaternary structure, part of the 30S ribosomal subunit. Forms a tight heterodimer with protein bS6.

Binds as a heterodimer with protein bS6 to the central domain of the 16S rRNA, where it helps stabilize the platform of the 30S subunit. The chain is Small ribosomal subunit protein bS18 from Lactobacillus helveticus (strain DPC 4571).